The chain runs to 43 residues: Myotoxin-1 (43 aa).

Disulfide bonds link cysteine 4–cysteine 36, cysteine 11–cysteine 30, and cysteine 18–cysteine 37.

This sequence belongs to the crotamine-myotoxin family. Monomer. Expressed by the venom gland.

It localises to the secreted. In terms of biological role, cationic peptide that possesses multiple functions. It acts as a cell-penetrating peptide (CPP), and as a potent voltage-gated potassium channel (Kv) inhibitor. It exhibits antimicrobial activities, hind limb paralysis, and severe muscle necrosis by a non-enzymatic mechanism. The protein is Myotoxin-1 of Crotalus concolor (Midget faded rattlesnake).